A 355-amino-acid chain; its full sequence is 6-aminohexanoate-oligomer endohydrolase (355 aa).

The active-site Nucleophile is the T267.

The protein belongs to the peptidase S58 family. Heterotetramer composed of 4 alpha/beta heterodimers. Exists at the monomer/dimer/trimer equilibrium in aqueous solution. In terms of processing, expressed as an inactive precursor that is cleaved autocatalytically at Asn266/Thr267 to generate an active enzyme composed of an alpha subunit and a beta subunit.

It catalyses the reaction [N-(6-aminohexanoyl)]n + H2O = [N-(6-aminohexanoyl)]n-x + [N-(6-aminohexanoyl)]x.. It participates in xenobiotic degradation; nylon-6 oligomer degradation. Its function is as follows. Involved in the degradation of nylon-6 oligomers. Degrades cyclic and linear oligomers of 6-aminohexanoate (Ahx) with a degree of polymerization greater than three by an endo-type mode. Cannot use Ahx cyclic dimer or the Ahx linear dimer. This chain is 6-aminohexanoate-oligomer endohydrolase, found in Paenarthrobacter ureafaciens.